A 264-amino-acid polypeptide reads, in one-letter code: Acyl-[acyl-carrier-protein]--UDP-N-acetylglucosamine O-acyltransferase (264 aa).

Belongs to the transferase hexapeptide repeat family. LpxA subfamily. Homotrimer.

It localises to the cytoplasm. The enzyme catalyses a (3R)-hydroxyacyl-[ACP] + UDP-N-acetyl-alpha-D-glucosamine = a UDP-3-O-[(3R)-3-hydroxyacyl]-N-acetyl-alpha-D-glucosamine + holo-[ACP]. It participates in glycolipid biosynthesis; lipid IV(A) biosynthesis; lipid IV(A) from (3R)-3-hydroxytetradecanoyl-[acyl-carrier-protein] and UDP-N-acetyl-alpha-D-glucosamine: step 1/6. In terms of biological role, involved in the biosynthesis of lipid A, a phosphorylated glycolipid that anchors the lipopolysaccharide to the outer membrane of the cell. This chain is Acyl-[acyl-carrier-protein]--UDP-N-acetylglucosamine O-acyltransferase, found in Albidiferax ferrireducens (strain ATCC BAA-621 / DSM 15236 / T118) (Rhodoferax ferrireducens).